The chain runs to 466 residues: Asparagine--tRNA ligase (466 aa).

The protein belongs to the class-II aminoacyl-tRNA synthetase family. Homodimer.

It localises to the cytoplasm. It catalyses the reaction tRNA(Asn) + L-asparagine + ATP = L-asparaginyl-tRNA(Asn) + AMP + diphosphate + H(+). In Shewanella sp. (strain ANA-3), this protein is Asparagine--tRNA ligase.